An 872-amino-acid chain; its full sequence is Alanine--tRNA ligase (872 aa).

Residues H567, H571, C669, and H673 each contribute to the Zn(2+) site.

The protein belongs to the class-II aminoacyl-tRNA synthetase family. It depends on Zn(2+) as a cofactor.

It localises to the cytoplasm. It carries out the reaction tRNA(Ala) + L-alanine + ATP = L-alanyl-tRNA(Ala) + AMP + diphosphate. In terms of biological role, catalyzes the attachment of alanine to tRNA(Ala) in a two-step reaction: alanine is first activated by ATP to form Ala-AMP and then transferred to the acceptor end of tRNA(Ala). Also edits incorrectly charged Ser-tRNA(Ala) and Gly-tRNA(Ala) via its editing domain. This Streptococcus mutans serotype c (strain ATCC 700610 / UA159) protein is Alanine--tRNA ligase.